Consider the following 586-residue polypeptide: Ferredoxin--nitrite reductase, chloroplastic (586 aa).

A compositionally biased stretch (low complexity) spans 1–18 (MTSFSLTFTSPLLPSSST). The segment at 1–20 (MTSFSLTFTSPLLPSSSTKP) is disordered. Residues 1-25 (MTSFSLTFTSPLLPSSSTKPKRSVL) constitute a chloroplast transit peptide. Lys103 is covalently cross-linked (Glycyl lysine isopeptide (Lys-Gly) (interchain with G-Cter in ubiquitin)). 4 residues coordinate [4Fe-4S] cluster: Cys464, Cys470, Cys505, and Cys509. A siroheme-binding site is contributed by Cys509.

It belongs to the nitrite and sulfite reductase 4Fe-4S domain family. As to quaternary structure, monomer. It depends on siroheme as a cofactor. The cofactor is [4Fe-4S] cluster.

The protein localises to the plastid. It localises to the chloroplast. It carries out the reaction 6 oxidized [2Fe-2S]-[ferredoxin] + NH4(+) + 2 H2O = nitrite + 6 reduced [2Fe-2S]-[ferredoxin] + 8 H(+). It functions in the pathway nitrogen metabolism; nitrate reduction (assimilation). In terms of biological role, catalyzes the six-electron reduction of nitrite to ammonium. In Arabidopsis thaliana (Mouse-ear cress), this protein is Ferredoxin--nitrite reductase, chloroplastic (NIR1).